We begin with the raw amino-acid sequence, 113 residues long: Large ribosomal subunit protein uL22 (113 aa).

This sequence belongs to the universal ribosomal protein uL22 family. In terms of assembly, part of the 50S ribosomal subunit.

This protein binds specifically to 23S rRNA; its binding is stimulated by other ribosomal proteins, e.g. L4, L17, and L20. It is important during the early stages of 50S assembly. It makes multiple contacts with different domains of the 23S rRNA in the assembled 50S subunit and ribosome. In terms of biological role, the globular domain of the protein is located near the polypeptide exit tunnel on the outside of the subunit, while an extended beta-hairpin is found that lines the wall of the exit tunnel in the center of the 70S ribosome. The polypeptide is Large ribosomal subunit protein uL22 (Magnetococcus marinus (strain ATCC BAA-1437 / JCM 17883 / MC-1)).